Reading from the N-terminus, the 203-residue chain is Glycerol-3-phosphate acyltransferase (203 aa).

Transmembrane regions (helical) follow at residues Met1 to Pro21, Val52 to Val72, Ala73 to Ile93, Ile115 to Ile135, Ile140 to Gly160, and Gln161 to Arg181.

It belongs to the PlsY family. Probably interacts with PlsX.

It is found in the cell inner membrane. It catalyses the reaction an acyl phosphate + sn-glycerol 3-phosphate = a 1-acyl-sn-glycero-3-phosphate + phosphate. It functions in the pathway lipid metabolism; phospholipid metabolism. Functionally, catalyzes the transfer of an acyl group from acyl-phosphate (acyl-PO(4)) to glycerol-3-phosphate (G3P) to form lysophosphatidic acid (LPA). This enzyme utilizes acyl-phosphate as fatty acyl donor, but not acyl-CoA or acyl-ACP. This chain is Glycerol-3-phosphate acyltransferase, found in Synechococcus sp. (strain JA-3-3Ab) (Cyanobacteria bacterium Yellowstone A-Prime).